Here is a 528-residue protein sequence, read N- to C-terminus: Chaperonin GroEL, chloroplastic (528 aa).

ATP is bound by residues 29-32 (TLGP), 86-90 (DGTTT), Gly-414, and Asp-496.

The protein belongs to the chaperonin (HSP60) family. Forms a cylinder of 14 subunits composed of two heptameric rings stacked back-to-back. Interacts with the co-chaperonin GroES.

The protein localises to the plastid. It localises to the chloroplast. It catalyses the reaction ATP + H2O + a folded polypeptide = ADP + phosphate + an unfolded polypeptide.. Functionally, together with its co-chaperonin GroES, plays an essential role in assisting protein folding. The GroEL-GroES system forms a nano-cage that allows encapsulation of the non-native substrate proteins and provides a physical environment optimized to promote and accelerate protein folding. The polypeptide is Chaperonin GroEL, chloroplastic (Porphyra purpurea (Red seaweed)).